We begin with the raw amino-acid sequence, 132 residues long: Phosphoribosyl-AMP cyclohydrolase (132 aa).

A Mg(2+)-binding site is contributed by D81. C82 contacts Zn(2+). Mg(2+) contacts are provided by D83 and D85. C99 and C106 together coordinate Zn(2+).

It belongs to the PRA-CH family. In terms of assembly, homodimer. Mg(2+) serves as cofactor. Zn(2+) is required as a cofactor.

It is found in the cytoplasm. The catalysed reaction is 1-(5-phospho-beta-D-ribosyl)-5'-AMP + H2O = 1-(5-phospho-beta-D-ribosyl)-5-[(5-phospho-beta-D-ribosylamino)methylideneamino]imidazole-4-carboxamide. It functions in the pathway amino-acid biosynthesis; L-histidine biosynthesis; L-histidine from 5-phospho-alpha-D-ribose 1-diphosphate: step 3/9. In terms of biological role, catalyzes the hydrolysis of the adenine ring of phosphoribosyl-AMP. The protein is Phosphoribosyl-AMP cyclohydrolase of Chromobacterium violaceum (strain ATCC 12472 / DSM 30191 / JCM 1249 / CCUG 213 / NBRC 12614 / NCIMB 9131 / NCTC 9757 / MK).